A 213-amino-acid polypeptide reads, in one-letter code: Dimethylamine corrinoid protein (213 aa).

Positions M1–K90 constitute a B12-binding N-terminal domain. In terms of domain architecture, B12-binding spans L91–A213. H104 contacts methylcob(III)alamin.

It belongs to the methylamine corrinoid protein family. Copurifies with MtbA.

It functions in the pathway one-carbon metabolism; methanogenesis from dimethylamine. Acts as a methyl group carrier between MtbB1 and MtbA. Binds 1 corrinoid cofactor per protein, is subsequently demethylated by MtbA. This Methanosarcina barkeri protein is Dimethylamine corrinoid protein.